The primary structure comprises 89 residues: Small ribosomal subunit protein uS15 (89 aa).

It belongs to the universal ribosomal protein uS15 family. As to quaternary structure, part of the 30S ribosomal subunit. Forms a bridge to the 50S subunit in the 70S ribosome, contacting the 23S rRNA.

Functionally, one of the primary rRNA binding proteins, it binds directly to 16S rRNA where it helps nucleate assembly of the platform of the 30S subunit by binding and bridging several RNA helices of the 16S rRNA. Forms an intersubunit bridge (bridge B4) with the 23S rRNA of the 50S subunit in the ribosome. This Photorhabdus laumondii subsp. laumondii (strain DSM 15139 / CIP 105565 / TT01) (Photorhabdus luminescens subsp. laumondii) protein is Small ribosomal subunit protein uS15.